We begin with the raw amino-acid sequence, 475 residues long: Gamma-aminobutyric acid receptor subunit gamma-2 (475 aa).

Positions 1 to 39 are cleaved as a signal peptide; the sequence is MSSPNIWSTGSSVYSTPVFSQKMTVWILLLLSLYPGFTS. Residues 40 to 275 lie on the Extracellular side of the membrane; it reads QKSDDDYEDY…FDLSRRMGYF (236 aa). 2 N-linked (GlcNAc...) asparagine glycosylation sites follow: Asn-52 and Asn-129. Cysteines 190 and 204 form a disulfide. An N-linked (GlcNAc...) asparagine glycan is attached at Asn-247. A helical transmembrane segment spans residues 276–296; that stretch reads TIQTYIPCTLIVVLSWVSFWI. Residues 297-302 lie on the Cytoplasmic side of the membrane; the sequence is NKDAVP. The chain crosses the membrane as a helical span at residues 303–322; sequence ARTSLGITTVLTMTTLSTIA. Over 323-334 the chain is Extracellular; it reads RKSLPKVSYVTA. A helical transmembrane segment spans residues 335 to 359; that stretch reads MDLFVSVCFIFVFSALVEYGTLHYF. The Cytoplasmic portion of the chain corresponds to 360–451; that stretch reads VSNRKPSKDK…IHIRIAKMDS (92 aa). Residues 433–450 form an interaction with GABARAP region; it reads RTGAWRHGRIHIRIAKMD. The helical transmembrane segment at 452-472 threads the bilayer; that stretch reads YARIFFPTAFCLFNLVYWVSY. The Extracellular segment spans residues 473–475; that stretch reads LYL.

This sequence belongs to the ligand-gated ion channel (TC 1.A.9) family. Gamma-aminobutyric acid receptor (TC 1.A.9.5) subfamily. GABRG2 sub-subfamily. As to quaternary structure, heteropentamer, formed by a combination of alpha (GABRA1-6), beta (GABRB1-3), gamma (GABRG1-3), delta (GABRD), epsilon (GABRE), rho (GABRR1-3), pi (GABRP) and theta (GABRQ) chains, each subunit exhibiting distinct physiological and pharmacological properties. Interacts with GABARAP. Interacts with KIF21B. Identified in a complex of 720 kDa composed of LHFPL4, NLGN2, GABRA1, GABRB2, GABRG2 and GABRB3. Interacts with LHFPL4. Interacts with SHISA7; interaction leads to the regulation of GABA(A) receptor trafficking, channel deactivation kinetics and pharmacology. Palmitoylated by ZDHHC3/GODZ; required for the accumulation of GABA(A) receptors at the postsynaptic membrane of inhibitory GABAergic synapses.

Its subcellular location is the postsynaptic cell membrane. The protein resides in the cell membrane. It is found in the cell projection. It localises to the dendrite. The protein localises to the cytoplasmic vesicle membrane. The catalysed reaction is chloride(in) = chloride(out). Allosterically activated by benzodiazepines. Activated by pentobarbital. Potentiated by etomidate, propofol, pregnanolone. Inhibited by the antagonist bicuculline. Inhibited by zinc ions. Potentiated by histamine. Its function is as follows. Gamma subunit of the heteropentameric ligand-gated chloride channel gated by gamma-aminobutyric acid (GABA), a major inhibitory neurotransmitter in the brain. GABA-gated chloride channels, also named GABA(A) receptors (GABAAR), consist of five subunits arranged around a central pore and contain GABA active binding site(s) located at the alpha and beta subunit interface(s). When activated by GABA, GABAARs selectively allow the flow of chloride anions across the cell membrane down their electrochemical gradient. Gamma-2/GABRG2-containing GABAARs are found at both synaptic and extrasynaptic sites. Chloride influx into the postsynaptic neuron following GABAAR opening decreases the neuron ability to generate a new action potential, thereby reducing nerve transmission. GABAARs containing alpha-1 and beta-2 or -3 subunits exhibit synaptogenic activity; the gamma-2 subunit being necessary but not sufficient to induce rapid synaptic contacts formation. Extrasynaptic gamma-2-containing receptors contribute to the tonic GABAergic inhibition. GABAARs function also as histamine receptor where histamine binds at the interface of two neighboring beta subunits and potentiates GABA response in a gamma-2 subunit-controlled manner. The sequence is that of Gamma-aminobutyric acid receptor subunit gamma-2 from Homo sapiens (Human).